The primary structure comprises 77 residues: PTS system N-acetylglucosamine-specific EIIB component (77 aa).

Residues 2 to 77 (ASKAEKIVAG…PIAAEIEDMM (76 aa)) enclose the PTS EIIB type-1 domain. Cys-24 functions as the Phosphocysteine intermediate; for EIIB activity in the catalytic mechanism.

The enzyme catalyses N(pros)-phospho-L-histidyl-[protein] + N-acetyl-D-glucosamine(out) = N-acetyl-D-glucosamine 6-phosphate(in) + L-histidyl-[protein]. The phosphoenolpyruvate-dependent sugar phosphotransferase system (sugar PTS), a major carbohydrate active transport system, catalyzes the phosphorylation of incoming sugar substrates concomitantly with their translocation across the cell membrane. This system is involved in N-acetylglucosamine (GlcNAc) transport. The sequence is that of PTS system N-acetylglucosamine-specific EIIB component from Streptomyces coelicolor (strain ATCC BAA-471 / A3(2) / M145).